The primary structure comprises 296 residues: Ribosomal protein L11 methyltransferase (296 aa).

S-adenosyl-L-methionine contacts are provided by T145, G166, D188, and N230.

Belongs to the methyltransferase superfamily. PrmA family.

The protein localises to the cytoplasm. The enzyme catalyses L-lysyl-[protein] + 3 S-adenosyl-L-methionine = N(6),N(6),N(6)-trimethyl-L-lysyl-[protein] + 3 S-adenosyl-L-homocysteine + 3 H(+). Functionally, methylates ribosomal protein L11. This chain is Ribosomal protein L11 methyltransferase, found in Histophilus somni (strain 129Pt) (Haemophilus somnus).